An 859-amino-acid polypeptide reads, in one-letter code: Leucine--tRNA ligase (859 aa).

Positions Pro-42–His-52 match the 'HIGH' region motif. Positions Lys-618–Ser-622 match the 'KMSKS' region motif. An ATP-binding site is contributed by Lys-621.

This sequence belongs to the class-I aminoacyl-tRNA synthetase family.

It is found in the cytoplasm. The enzyme catalyses tRNA(Leu) + L-leucine + ATP = L-leucyl-tRNA(Leu) + AMP + diphosphate. The chain is Leucine--tRNA ligase from Shewanella amazonensis (strain ATCC BAA-1098 / SB2B).